A 269-amino-acid polypeptide reads, in one-letter code: 4-hydroxy-tetrahydrodipicolinate reductase (269 aa).

NAD(+) contacts are provided by residues 11-16 (GASGRM) and Glu-37. NADP(+) is bound at residue Arg-38. NAD(+) is bound by residues 101 to 103 (GTT) and 125 to 128 (AGNM). His-158 (proton donor/acceptor) is an active-site residue. Residue His-159 coordinates (S)-2,3,4,5-tetrahydrodipicolinate. Residue Lys-162 is the Proton donor of the active site. A (S)-2,3,4,5-tetrahydrodipicolinate-binding site is contributed by 168–169 (GT).

Belongs to the DapB family.

The protein resides in the cytoplasm. The enzyme catalyses (S)-2,3,4,5-tetrahydrodipicolinate + NAD(+) + H2O = (2S,4S)-4-hydroxy-2,3,4,5-tetrahydrodipicolinate + NADH + H(+). It catalyses the reaction (S)-2,3,4,5-tetrahydrodipicolinate + NADP(+) + H2O = (2S,4S)-4-hydroxy-2,3,4,5-tetrahydrodipicolinate + NADPH + H(+). The protein operates within amino-acid biosynthesis; L-lysine biosynthesis via DAP pathway; (S)-tetrahydrodipicolinate from L-aspartate: step 4/4. Catalyzes the conversion of 4-hydroxy-tetrahydrodipicolinate (HTPA) to tetrahydrodipicolinate. This chain is 4-hydroxy-tetrahydrodipicolinate reductase, found in Cereibacter sphaeroides (strain ATCC 17029 / ATH 2.4.9) (Rhodobacter sphaeroides).